Here is a 163-residue protein sequence, read N- to C-terminus: Protein EARLY RESPONSIVE TO DEHYDRATION 15 (163 aa).

The PAM2-like motif lies at 10–20; the sequence is TLNPDAPLFIP. The interval 118-163 is disordered; sequence NGEMVKKSSGNRSPRSIVEPAKYAEKPAKWGNQRVAAAPRNIHQPR.

In terms of assembly, interacts with PAB2, PAB4 and PAB8. Interacts with MPC. Expressed in cauline leaves, stems, rosette leaves, immature siliques and primary inflorescences.

The protein localises to the cytoplasm. In terms of biological role, central component of stress responses that interacts with poly(A)-binding proteins. Negative regulator of abscisic acid (ABA) responses, including resistance to drought and freezing as well as stomatal closure regulation. Mediates resistance to the bacterial necrotroph pathogen Erwinia carotovora subsp. carotovora and promotes the induction of marker genes for systemic acquired resistance (SAR). This chain is Protein EARLY RESPONSIVE TO DEHYDRATION 15 (ERD15), found in Arabidopsis thaliana (Mouse-ear cress).